A 1406-amino-acid chain; its full sequence is DNA-directed RNA polymerase subunit beta' (1406 aa).

Zn(2+)-binding residues include Cys70, Cys72, Cys85, and Cys88. Asp460, Asp462, and Asp464 together coordinate Mg(2+). 4 residues coordinate Zn(2+): Cys814, Cys888, Cys895, and Cys898.

This sequence belongs to the RNA polymerase beta' chain family. As to quaternary structure, the RNAP catalytic core consists of 2 alpha, 1 beta, 1 beta' and 1 omega subunit. When a sigma factor is associated with the core the holoenzyme is formed, which can initiate transcription. Requires Mg(2+) as cofactor. The cofactor is Zn(2+).

The catalysed reaction is RNA(n) + a ribonucleoside 5'-triphosphate = RNA(n+1) + diphosphate. DNA-dependent RNA polymerase catalyzes the transcription of DNA into RNA using the four ribonucleoside triphosphates as substrates. This Yersinia pseudotuberculosis serotype O:1b (strain IP 31758) protein is DNA-directed RNA polymerase subunit beta'.